Reading from the N-terminus, the 802-residue chain is Leucine--tRNA ligase (802 aa).

A 'HIGH' region motif is present at residues 40 to 51; it reads PYPSGAGLHVGH. A 'KMSKS' region motif is present at residues 576 to 580; that stretch reads KMSKS. Residue Lys579 participates in ATP binding.

Belongs to the class-I aminoacyl-tRNA synthetase family.

It is found in the cytoplasm. It catalyses the reaction tRNA(Leu) + L-leucine + ATP = L-leucyl-tRNA(Leu) + AMP + diphosphate. In Bacillus thuringiensis subsp. konkukian (strain 97-27), this protein is Leucine--tRNA ligase.